A 178-amino-acid chain; its full sequence is Protein-export protein SecB (178 aa).

A compositionally biased stretch (acidic residues) spans 1–13; sequence MADEGDVLTDLDM. The disordered stretch occupies residues 1–25; sequence MADEGDVLTDLDMDPAAGGNGADNR.

Belongs to the SecB family. As to quaternary structure, homotetramer, a dimer of dimers. One homotetramer interacts with 1 SecA dimer.

It is found in the cytoplasm. Its function is as follows. One of the proteins required for the normal export of preproteins out of the cell cytoplasm. It is a molecular chaperone that binds to a subset of precursor proteins, maintaining them in a translocation-competent state. It also specifically binds to its receptor SecA. The protein is Protein-export protein SecB of Erythrobacter litoralis (strain HTCC2594).